The following is a 186-amino-acid chain: ADP-ribosylation factor-like protein 8A (186 aa).

The note=Mediates targeting to membranes intramembrane region spans 1–19 (MIALFNKLLDWFKALFWKE). Residues 29-35 (QYSGKTT), 71-75 (DIGGQ), and 130-133 (NKRD) each bind GTP.

Belongs to the small GTPase superfamily. Arf family. Interacts with PLEKHM1. When GTP-bound, interacts with RUFY3 and RUFY4, but not with RUFY1, nor RUFY2. As to expression, ubiquitously expressed.

The protein localises to the late endosome membrane. It is found in the lysosome membrane. Its subcellular location is the cytoplasm. The protein resides in the cytoskeleton. It localises to the spindle. The protein localises to the cell projection. It is found in the axon. Its subcellular location is the synapse. Its function is as follows. Plays a role in lysosome motility. In neurons, mediates the anterograde axonal long-range transport of presynaptic lysosome-related vesicles required for presynaptic biogenesis and synaptic function. May play a role in chromosome segregation. This Homo sapiens (Human) protein is ADP-ribosylation factor-like protein 8A (ARL8A).